A 263-amino-acid polypeptide reads, in one-letter code: 3-methyl-2-oxobutanoate hydroxymethyltransferase (263 aa).

The Mg(2+) site is built by Asp44 and Asp83. Residues 44–45, Asp83, and Lys113 each bind 3-methyl-2-oxobutanoate; that span reads DS. Glu115 is a binding site for Mg(2+). Catalysis depends on Glu183, which acts as the Proton acceptor.

It belongs to the PanB family. Homodecamer; pentamer of dimers. It depends on Mg(2+) as a cofactor.

It localises to the cytoplasm. The enzyme catalyses 3-methyl-2-oxobutanoate + (6R)-5,10-methylene-5,6,7,8-tetrahydrofolate + H2O = 2-dehydropantoate + (6S)-5,6,7,8-tetrahydrofolate. Its pathway is cofactor biosynthesis; (R)-pantothenate biosynthesis; (R)-pantoate from 3-methyl-2-oxobutanoate: step 1/2. Its function is as follows. Catalyzes the reversible reaction in which hydroxymethyl group from 5,10-methylenetetrahydrofolate is transferred onto alpha-ketoisovalerate to form ketopantoate. This chain is 3-methyl-2-oxobutanoate hydroxymethyltransferase, found in Trichodesmium erythraeum (strain IMS101).